The sequence spans 157 residues: Ubiquitin-like protein 4A (157 aa).

Residues 1–76 (MQLTVKALQG…LNLVVKPLEK (76 aa)) enclose the Ubiquitin-like domain. A Glycyl lysine isopeptide (Lys-Gly) (interchain with G-Cter in ubiquitin) cross-link involves residue Lys48. At Ser90 the chain carries Phosphoserine. Residues 96-138 (WQLISKVLARHFSAADASRVLEQLQRDYQRSLSRLTLDDIERL) form a required and sufficient for interaction with BAG6 region.

Component of the BAG6/BAT3 complex, at least composed of BAG6, UBL4A and GET4/TRC35. Interacts with BAG6; the interaction is direct and required for UBL4A protein stability. Interacts with USP13; may be indirect via BAG6. Polyubiquitinated. Ubiquitination by AMFR and deubiquitination by USP13 may regulate the interaction between the BAG6/BAT complex and SGTA and therefore may regulate client proteins fate.

The protein resides in the cytoplasm. It is found in the cytosol. Its subcellular location is the nucleus. Functionally, as part of a cytosolic protein quality control complex, the BAG6/BAT3 complex, maintains misfolded and hydrophobic patches-containing proteins in a soluble state and participates in their proper delivery to the endoplasmic reticulum or alternatively can promote their sorting to the proteasome where they undergo degradation. The BAG6/BAT3 complex is involved in the post-translational delivery of tail-anchored/type II transmembrane proteins to the endoplasmic reticulum membrane. Recruited to ribosomes, it interacts with the transmembrane region of newly synthesized tail-anchored proteins and together with SGTA and ASNA1 mediates their delivery to the endoplasmic reticulum. Client proteins that cannot be properly delivered to the endoplasmic reticulum are ubiquitinated and sorted to the proteasome. Similarly, the BAG6/BAT3 complex also functions as a sorting platform for proteins of the secretory pathway that are mislocalized to the cytosol either delivering them to the proteasome for degradation or to the endoplasmic reticulum. The BAG6/BAT3 complex also plays a role in the endoplasmic reticulum-associated degradation (ERAD), a quality control mechanism that eliminates unwanted proteins of the endoplasmic reticulum through their retrotranslocation to the cytosol and their targeting to the proteasome. It maintains these retrotranslocated proteins in an unfolded yet soluble state condition in the cytosol to ensure their proper delivery to the proteasome. This chain is Ubiquitin-like protein 4A (UBL4A), found in Plecturocebus moloch (Dusky titi monkey).